We begin with the raw amino-acid sequence, 193 residues long: Selenoprotein S A (193 aa).

The chain crosses the membrane as a helical span at residues 29–49 (WALASYGWYILFGCIILYFLI). Over residues 114–125 (IETWDRMQEGKS) the composition is skewed to basic and acidic residues. The segment at 114–193 (IETWDRMQEG…RRGPSSGGUG (80 aa)) is disordered. Residues 137 to 153 (SPSTSASSSPSTSSSAP) show a composition bias toward low complexity. Position 192 (Sec-192) is a non-standard amino acid, selenocysteine.

The protein belongs to the selenoprotein S family.

The protein resides in the endoplasmic reticulum membrane. It is found in the cytoplasm. Its function is as follows. Involved in the degradation process of misfolded endoplasmic reticulum (ER) luminal proteins. Participates in the transfer of misfolded proteins from the ER to the cytosol, where they are destroyed by the proteasome in a ubiquitin-dependent manner. This Xenopus laevis (African clawed frog) protein is Selenoprotein S A (vimp-a).